Here is a 705-residue protein sequence, read N- to C-terminus: Polyribonucleotide nucleotidyltransferase (705 aa).

Residues aspartate 487 and aspartate 493 each coordinate Mg(2+). Positions 554–613 (PKILTMSINPDKIRDVIGPSGKQINKIIEDTGVKIDIEQDGTIFISSTDESMNQKAKKII) constitute a KH domain. Residues 623-691 (GQLYLGKVKR…KQGRVNLSRK (69 aa)) enclose the S1 motif domain.

It belongs to the polyribonucleotide nucleotidyltransferase family. Requires Mg(2+) as cofactor.

The protein resides in the cytoplasm. It carries out the reaction RNA(n+1) + phosphate = RNA(n) + a ribonucleoside 5'-diphosphate. In terms of biological role, involved in mRNA degradation. Catalyzes the phosphorolysis of single-stranded polyribonucleotides processively in the 3'- to 5'-direction. The chain is Polyribonucleotide nucleotidyltransferase from Bacillus licheniformis (strain ATCC 14580 / DSM 13 / JCM 2505 / CCUG 7422 / NBRC 12200 / NCIMB 9375 / NCTC 10341 / NRRL NRS-1264 / Gibson 46).